The sequence spans 309 residues: Ribonuclease Z (309 aa).

The Zn(2+) site is built by His63, His65, Asp67, His68, His141, Asp212, and His270. The active-site Proton acceptor is Asp67.

Belongs to the RNase Z family. As to quaternary structure, homodimer. It depends on Zn(2+) as a cofactor.

The enzyme catalyses Endonucleolytic cleavage of RNA, removing extra 3' nucleotides from tRNA precursor, generating 3' termini of tRNAs. A 3'-hydroxy group is left at the tRNA terminus and a 5'-phosphoryl group is left at the trailer molecule.. Zinc phosphodiesterase, which displays some tRNA 3'-processing endonuclease activity. Probably involved in tRNA maturation, by removing a 3'-trailer from precursor tRNA. The protein is Ribonuclease Z of Lactobacillus delbrueckii subsp. bulgaricus (strain ATCC 11842 / DSM 20081 / BCRC 10696 / JCM 1002 / NBRC 13953 / NCIMB 11778 / NCTC 12712 / WDCM 00102 / Lb 14).